Here is a 330-residue protein sequence, read N- to C-terminus: Inactive hydroxysteroid dehydrogenase-like protein 1 (330 aa).

A2 carries the N-acetylalanine modification. The required for mitochondria translocation stretch occupies residues A2–A82. NADP(+)-binding positions include G74–G80, D125, and K222.

It belongs to the short-chain dehydrogenases/reductases (SDR) family. 17-beta-HSD 3 subfamily. In terms of assembly, interacts with STYXL1.

It is found in the mitochondrion. The protein is Inactive hydroxysteroid dehydrogenase-like protein 1 (Hsdl1) of Mus musculus (Mouse).